The chain runs to 473 residues: Aspartyl/glutamyl-tRNA(Asn/Gln) amidotransferase subunit B (473 aa).

Belongs to the GatB/GatE family. GatB subfamily. In terms of assembly, heterotrimer of A, B and C subunits.

It catalyses the reaction L-glutamyl-tRNA(Gln) + L-glutamine + ATP + H2O = L-glutaminyl-tRNA(Gln) + L-glutamate + ADP + phosphate + H(+). The catalysed reaction is L-aspartyl-tRNA(Asn) + L-glutamine + ATP + H2O = L-asparaginyl-tRNA(Asn) + L-glutamate + ADP + phosphate + 2 H(+). Functionally, allows the formation of correctly charged Asn-tRNA(Asn) or Gln-tRNA(Gln) through the transamidation of misacylated Asp-tRNA(Asn) or Glu-tRNA(Gln) in organisms which lack either or both of asparaginyl-tRNA or glutaminyl-tRNA synthetases. The reaction takes place in the presence of glutamine and ATP through an activated phospho-Asp-tRNA(Asn) or phospho-Glu-tRNA(Gln). This is Aspartyl/glutamyl-tRNA(Asn/Gln) amidotransferase subunit B from Methanococcoides burtonii (strain DSM 6242 / NBRC 107633 / OCM 468 / ACE-M).